Here is a 301-residue protein sequence, read N- to C-terminus: tRNA dimethylallyltransferase 1 (301 aa).

10 to 17 (GPTASGKT) contributes to the ATP binding site. 12–17 (TASGKT) is a binding site for substrate. Residues 35–38 (DSRQ) are interaction with substrate tRNA.

The protein belongs to the IPP transferase family. Monomer. It depends on Mg(2+) as a cofactor.

The enzyme catalyses adenosine(37) in tRNA + dimethylallyl diphosphate = N(6)-dimethylallyladenosine(37) in tRNA + diphosphate. Its function is as follows. Catalyzes the transfer of a dimethylallyl group onto the adenine at position 37 in tRNAs that read codons beginning with uridine, leading to the formation of N6-(dimethylallyl)adenosine (i(6)A). This Geotalea uraniireducens (strain Rf4) (Geobacter uraniireducens) protein is tRNA dimethylallyltransferase 1.